The primary structure comprises 188 residues: Dual specificity protein phosphatase 18 (188 aa).

The Tyrosine-protein phosphatase domain maps to 19-160 (GLSQITSSLY…LIHYEFQLFG (142 aa)). Positions 95 to 141 (MKQGRTLLHCAAGVSRSAALCLAYLMKYHAMSLLDAHTWTKSCRPII) are sufficient for mitochondrial localization. The Phosphocysteine intermediate role is filled by Cys-104.

Belongs to the protein-tyrosine phosphatase family. Non-receptor class dual specificity subfamily.

It is found in the cytoplasm. It localises to the nucleus. The protein localises to the mitochondrion inner membrane. It catalyses the reaction O-phospho-L-tyrosyl-[protein] + H2O = L-tyrosyl-[protein] + phosphate. It carries out the reaction O-phospho-L-seryl-[protein] + H2O = L-seryl-[protein] + phosphate. The enzyme catalyses O-phospho-L-threonyl-[protein] + H2O = L-threonyl-[protein] + phosphate. In terms of biological role, can dephosphorylate single and diphosphorylated synthetic MAPK peptides, with preference for the phosphotyrosine and diphosphorylated forms over phosphothreonine. In vitro, dephosphorylates p-nitrophenyl phosphate (pNPP). This is Dual specificity protein phosphatase 18 (DUSP18) from Bos taurus (Bovine).